The following is a 394-amino-acid chain: Argininosuccinate synthase (394 aa).

ATP is bound by residues 7 to 15 (AYSGGLDTS) and Ala-34. L-citrulline-binding residues include Tyr-85 and Ser-90. An ATP-binding site is contributed by Gly-115. Residues Thr-117, Asn-121, and Asp-122 each coordinate L-aspartate. Asn-121 lines the L-citrulline pocket. L-citrulline-binding residues include Arg-125, Ser-176, Ser-185, Glu-261, and Tyr-273.

This sequence belongs to the argininosuccinate synthase family. Type 1 subfamily. In terms of assembly, homotetramer.

It is found in the cytoplasm. It catalyses the reaction L-citrulline + L-aspartate + ATP = 2-(N(omega)-L-arginino)succinate + AMP + diphosphate + H(+). It functions in the pathway amino-acid biosynthesis; L-arginine biosynthesis; L-arginine from L-ornithine and carbamoyl phosphate: step 2/3. The chain is Argininosuccinate synthase from Ehrlichia ruminantium (strain Welgevonden).